A 95-amino-acid chain; its full sequence is Parvalbumin alpha (95 aa).

At S19 the chain carries Phosphoserine. EF-hand domains lie at 34–69 (KNRE…FSAD) and 73–95 (LSDT…KIGA). Ca(2+) contacts are provided by D47, D49, S51, F53, E55, E58, D86, D88, D90, and K92.

It belongs to the parvalbumin family.

In terms of biological role, in muscle, parvalbumin is thought to be involved in relaxation after contraction. It binds two calcium ions. The protein is Parvalbumin alpha (PVALB) of Cavia porcellus (Guinea pig).